Consider the following 770-residue polypeptide: Amyloid-beta precursor protein (770 aa).

The signal sequence occupies residues 1 to 17 (MLPGLALLLLAAWTARA). Topologically, residues 18–701 (LEVPTDGNAG…AEDVGSNKGA (684 aa)) are extracellular. Residues 28–123 (LLAEPQIAMF…PYRCLVGEFV (96 aa)) form a GFLD subdomain region. The 162-residue stretch at 28–189 (LLAEPQIAMF…RGVEFVCCPL (162 aa)) folds into the E1 domain. 6 disulfides stabilise this stretch: Cys-38-Cys-62, Cys-73-Cys-117, Cys-98-Cys-105, Cys-133-Cys-187, Cys-144-Cys-174, and Cys-158-Cys-186. 96-110 (NWCKRGRKQCKTHPH) serves as a coordination point for heparin. The cuBD subdomain stretch occupies residues 131–189 (DKCKFLHQERMDVCETHLHWHTVAKETCSEKSTNLHDYGMLLPCGIDKFRGVEFVCCPL). Cu(2+) contacts are provided by His-147, His-151, and Tyr-168. The interval 181-188 (GVEFVCCP) is zinc-binding. 3 residues coordinate Zn(2+): Glu-183, Cys-186, and Cys-187. The span at 194–207 (DNVDSADAEEDDSD) shows a compositional bias: acidic residues. Residues 194–284 (DNVDSADAEE…TTTTTTESVE (91 aa)) form a disordered region. The residue at position 198 (Ser-198) is a Phosphoserine; by CK2. Ser-206 bears the Phosphoserine; by CK1 mark. Residues Tyr-217 and Tyr-262 each carry the sulfotyrosine modification. Residues 228-264 (VAEEEEVAEVEEEEADDDEDDEDGDEVEEEAEEPYEE) are compositionally biased toward acidic residues. Positions 268–281 (RTTSIATTTTTTTE) are enriched in low complexity. Disulfide bonds link Cys-291-Cys-341, Cys-300-Cys-324, and Cys-316-Cys-337. The 51-residue stretch at 291–341 (CSEQAETGPCRAMISRWYFDVTEGKCAPFFYGGCGGNRNNFDTEEYCMAVC) folds into the BPTI/Kunitz inhibitor domain. Tyr-336 is modified (sulfotyrosine). Residues 344–365 (VMSQSLLKTTQEPLARDPVKLP) carry the OX-2 motif. Residues 374-565 (AVDKYLETPG…EEIQDEVDEL (192 aa)) enclose the E2 domain. Residues 391 to 423 (FQKAKERLEAKHRERMSQVMREWEEAERQAKNL) are heparin-binding. Ser-441 is modified (phosphoserine). Positions 491-522 (FNMLKKYVRAEQKDRQHTLKHFEHVRMVDPKK) are heparin-binding. At Tyr-497 the chain carries Phosphotyrosine. Positions 523–540 (AAQIRSQVMTHLRVIYER) are collagen-binding. N-linked (GlcNAc...) asparagine glycosylation is found at Asn-542 and Asn-571. Residues His-677, Tyr-681, His-684, and His-685 each coordinate Cu(2+). 4 residues coordinate Zn(2+): His-677, Tyr-681, His-684, and His-685. The segment at 695–722 (VGSNKGAIIGLMVGGVVIATVIVITLVM) is interaction with PSEN1. The helical transmembrane segment at 702-722 (IIGLMVGGVVIATVIVITLVM) threads the bilayer. The Cytoplasmic portion of the chain corresponds to 723–770 (LKKKQYTSIHHGVVEVDAAVTPEERHLSKMQQNGYENPTYKFFEQMQN). The Basolateral sorting signal signature appears at 724–734 (KKKQYTSIHHG). Thr-729 is subject to Phosphothreonine. Residue Ser-730 is modified to Phosphoserine; by APP-kinase I. Positions 732–751 (HHGVVEVDAAVTPEERHLSK) are interaction with G(o)-alpha. Thr-743 bears the Phosphothreonine; by CDK5 and MAPK10 mark. Residues 756–770 (GYENPTYKFFEQMQN) form a required for the interaction with KIF5B and for anterograde transport in axons region. A Phosphotyrosine; by ABL1 modification is found at Tyr-757. The short motif at 757 to 762 (YENPTY) is the YENPXY motif; contains endocytosis signal element. Lys-763 is covalently cross-linked (Glycyl lysine isopeptide (Lys-Gly) (interchain with G-Cter in ubiquitin)).

Belongs to the APP family. Binds, via its C-terminus, to the PID domain of several cytoplasmic proteins, including APBB family members, the APBA family, MAPK8IP1, SHC1 and NUMB and DAB1. Binding to DAB1 inhibits its serine phosphorylation. Interacts (via NPXY motif) with DAB2 (via PID domain); the interaction is impaired by tyrosine phosphorylation of the NPXY motif. Also interacts with GPCR-like protein BPP, APPBP1, IB1, KNS2 (via its TPR domains), APPBP2 (via BaSS) and DDB1. In vitro, it binds MAPT via the MT-binding domains. Associates with microtubules in the presence of ATP and in a kinesin-dependent manner. Interacts, through a C-terminal domain, with GNAO1. Amyloid-beta protein 42 binds CHRNA7 in hippocampal neurons. Amyloid-beta associates with HADH2. Interacts with CPEB1, ANKS1B and AGER. Interacts with ITM2B. Interacts with ITM2C. Interacts with IDE. Can form homodimers; dimerization is enhanced in the presence of Cu(2+) ions. Can form homodimers; this is promoted by heparin binding. Amyloid-beta protein 40 interacts with S100A9. CTF-alpha product of APP interacts with GSAP. Interacts with SORL1 (via N-terminal ectodomain); this interaction retains APP in the trans-Golgi network and reduces processing into soluble APP-alpha and amyloid-beta peptides. The C99 fragment also interacts with SORL1. Interacts with PLD3. Interacts with VDAC1. Interacts with NSG1; could regulate APP processing. Amyloid-beta protein 42 interacts with FPR2. Interacts (via transmembrane region) with PSEN1; the interaction is direct. Interacts with LRRK2. Interacts (via cytoplasmic domain) with KIF5B. Interacts (via C-terminus) with APBB2/FE65L1 (via C-terminus). Interacts (via intracellular domain) with APBB3. Proteolytically processed under normal cellular conditions. Cleavage either by alpha-secretase, beta-secretase or theta-secretase leads to generation and extracellular release of soluble APP peptides, S-APP-alpha and S-APP-beta, and the retention of corresponding membrane-anchored C-terminal fragments, C80, C83 and C99. Subsequent processing of C80 and C83 by gamma-secretase yields P3 peptides. This is the major secretory pathway and is non-amyloidogenic. Alternatively, presenilin/nicastrin-mediated gamma-secretase processing of C99 releases the amyloid-beta proteins, amyloid-beta protein 40 and amyloid-beta protein 42, major components of amyloid plaques, and the cytotoxic C-terminal fragments, gamma-CTF(50), gamma-CTF(57) and gamma-CTF(59). PSEN1 cleavage is more efficient with C83 than with C99 as substrate (in vitro). Amyloid-beta protein 40 and Amyloid-beta protein 42 are cleaved by ACE. Many other minor amyloid-beta peptides, amyloid-beta 1-X peptides, are found in cerebral spinal fluid (CSF) including the amyloid-beta X-15 peptides, produced from the cleavage by alpha-secretase. In terms of processing, proteolytically cleaved by caspases during neuronal apoptosis. Cleavage at Asp-739 by either caspase-3, -8 or -9 results in the production of the neurotoxic C31 peptide and the increased production of amyloid-beta peptides. Post-translationally, N- and O-glycosylated. Phosphorylation in the C-terminal on tyrosine, threonine and serine residues is neuron-specific. Phosphorylation can affect APP processing, neuronal differentiation and interaction with other proteins. Phosphorylated on Thr-743 in neuronal cells by Cdc5 kinase and Mapk10, in dividing cells by Cdc2 kinase in a cell-cycle dependent manner with maximal levels at the G2/M phase and, in vitro, by GSK-3-beta. The Thr-743 phosphorylated form causes a conformational change which reduces binding of Fe65 family members. In dopaminergic (DA) neurons, phosphorylation on Thr-743 by LRKK2 promotes the production and the nuclear translocation of the APP intracellular domain (AICD) which induces DA neuron apoptosis. Phosphorylation on Tyr-757 is required for SHC binding. Phosphorylated in the extracellular domain by casein kinases on both soluble and membrane-bound APP. This phosphorylation is inhibited by heparin. In terms of processing, trophic-factor deprivation triggers the cleavage of surface APP by beta-secretase to release sAPP-beta which is further cleaved to release an N-terminal fragment of APP (N-APP). Post-translationally, amyloid-beta peptides are degraded by IDE. Sulfated on tyrosine residues.

It is found in the cell membrane. The protein resides in the membrane. The protein localises to the perikaryon. It localises to the cell projection. Its subcellular location is the growth cone. It is found in the clathrin-coated pit. The protein resides in the early endosome. The protein localises to the cytoplasmic vesicle. It localises to the endoplasmic reticulum. Its subcellular location is the golgi apparatus. It is found in the secreted. The protein resides in the cell surface. The protein localises to the nucleus. It localises to the cytoplasm. Functions as a cell surface receptor and performs physiological functions on the surface of neurons relevant to neurite growth, neuronal adhesion and axonogenesis. Interaction between APP molecules on neighboring cells promotes synaptogenesis. Involved in cell mobility and transcription regulation through protein-protein interactions. Can promote transcription activation through binding to APBB1-KAT5 and inhibit Notch signaling through interaction with Numb. Couples to apoptosis-inducing pathways such as those mediated by G(o) and JIP. Inhibits G(o)-alpha ATPase activity. Acts as a kinesin I membrane receptor, mediating the axonal transport of beta-secretase and presenilin 1. By acting as a kinesin I membrane receptor, plays a role in axonal anterograde transport of cargo towards synapses in axons. May be involved in copper homeostasis/oxidative stress through copper ion reduction. In vitro, copper-metallated APP induces neuronal death directly or is potentiated through Cu(2+)-mediated low-density lipoprotein oxidation. Can regulate neurite outgrowth through binding to components of the extracellular matrix such as heparin and collagen I and IV. Induces a AGER-dependent pathway that involves activation of p38 MAPK, resulting in internalization of amyloid-beta peptide and mitochondrial dysfunction in cultured cortical neurons. Provides Cu(2+) ions for GPC1 which are required for release of nitric oxide (NO) and subsequent degradation of the heparan sulfate chains on GPC1. Functionally, amyloid-beta peptides are lipophilic metal chelators with metal-reducing activity. Binds transient metals such as copper, zinc and iron. Its function is as follows. The gamma-CTF peptides as well as the caspase-cleaved peptides, including C31, are potent enhancers of neuronal apoptosis. The chain is Amyloid-beta precursor protein from Pan troglodytes (Chimpanzee).